A 167-amino-acid polypeptide reads, in one-letter code: 6,7-dimethyl-8-ribityllumazine synthase (167 aa).

5-amino-6-(D-ribitylamino)uracil contacts are provided by residues F23, 57 to 59, and 81 to 83; these read TYE and AVI. 86 to 87 contacts (2S)-2-hydroxy-3-oxobutyl phosphate; the sequence is GT. H89 serves as the catalytic Proton donor. F119 lines the 5-amino-6-(D-ribitylamino)uracil pocket. R133 provides a ligand contact to (2S)-2-hydroxy-3-oxobutyl phosphate.

This sequence belongs to the DMRL synthase family.

The enzyme catalyses (2S)-2-hydroxy-3-oxobutyl phosphate + 5-amino-6-(D-ribitylamino)uracil = 6,7-dimethyl-8-(1-D-ribityl)lumazine + phosphate + 2 H2O + H(+). It participates in cofactor biosynthesis; riboflavin biosynthesis; riboflavin from 2-hydroxy-3-oxobutyl phosphate and 5-amino-6-(D-ribitylamino)uracil: step 1/2. Catalyzes the formation of 6,7-dimethyl-8-ribityllumazine by condensation of 5-amino-6-(D-ribitylamino)uracil with 3,4-dihydroxy-2-butanone 4-phosphate. This is the penultimate step in the biosynthesis of riboflavin. The sequence is that of 6,7-dimethyl-8-ribityllumazine synthase from Myxococcus xanthus (strain DK1622).